The chain runs to 128 residues: L-ectoine synthase (128 aa).

The protein belongs to the ectoine synthase family.

It carries out the reaction (2S)-4-acetamido-2-aminobutanoate = L-ectoine + H2O. Its pathway is amine and polyamine biosynthesis; ectoine biosynthesis; L-ectoine from L-aspartate 4-semialdehyde: step 3/3. Its function is as follows. Catalyzes the circularization of gamma-N-acetyl-alpha,gamma-diaminobutyric acid (ADABA) to ectoine (1,4,5,6-tetrahydro-2-methyl-4-pyrimidine carboxylic acid), which is an excellent osmoprotectant. The sequence is that of L-ectoine synthase from Vibrio parahaemolyticus serotype O3:K6 (strain RIMD 2210633).